The primary structure comprises 201 residues: Recombination protein RecR (201 aa).

The segment at 57 to 72 adopts a C4-type zinc-finger fold; it reads CSDCRTFTEQDVCAIC. In terms of domain architecture, Toprim spans 81–176; that stretch reads GLVCVVESPA…MASRIAHGVP (96 aa).

This sequence belongs to the RecR family.

In terms of biological role, may play a role in DNA repair. It seems to be involved in an RecBC-independent recombinational process of DNA repair. It may act with RecF and RecO. The sequence is that of Recombination protein RecR from Pectobacterium atrosepticum (strain SCRI 1043 / ATCC BAA-672) (Erwinia carotovora subsp. atroseptica).